We begin with the raw amino-acid sequence, 366 residues long: Peptide chain release factor 2 (366 aa).

Gln-251 is modified (N5-methylglutamine).

Belongs to the prokaryotic/mitochondrial release factor family. Post-translationally, methylated by PrmC. Methylation increases the termination efficiency of RF2.

The protein resides in the cytoplasm. In terms of biological role, peptide chain release factor 2 directs the termination of translation in response to the peptide chain termination codons UGA and UAA. The chain is Peptide chain release factor 2 (prfB) from Bacillus subtilis (strain 168).